The primary structure comprises 382 residues: tRNA (guanine(37)-N(1))-methyltransferase (382 aa).

Residues H205, 243 to 244, 269 to 270, and N291 contribute to the S-adenosyl-L-methionine site; these read DL and DA.

Belongs to the class I-like SAM-binding methyltransferase superfamily. TRM5/TYW2 family. In terms of assembly, monomer.

It localises to the mitochondrion matrix. Its subcellular location is the nucleus. The protein resides in the cytoplasm. It carries out the reaction guanosine(37) in tRNA + S-adenosyl-L-methionine = N(1)-methylguanosine(37) in tRNA + S-adenosyl-L-homocysteine + H(+). In terms of biological role, specifically methylates the N1 position of guanosine-37 in various cytoplasmic and mitochondrial tRNAs. Methylation is not dependent on the nature of the nucleoside 5' of the target nucleoside. This is the first step in the biosynthesis of wybutosine (yW), a modified base adjacent to the anticodon of tRNAs and required for accurate decoding. The polypeptide is tRNA (guanine(37)-N(1))-methyltransferase (Entamoeba histolytica (strain ATCC 30459 / HM-1:IMSS / ABRM)).